The primary structure comprises 1522 residues: Lysophospholipase NTE1 (1522 aa).

The Lumenal segment spans residues 1–73 (MVDGTYVNSS…SLLVYLINGT (73 aa)). A helical transmembrane segment spans residues 74-94 (VPFYLVVLGSVFTPIIVYLIL). The Cytoplasmic segment spans residues 95–1522 (RSRVLSAYSR…IHLLHRRNSI (1428 aa)). 3 disordered regions span residues 443-468 (SVQESIHRATLRSKNVHAHNSPTPNK), 485-523 (DLLSNVPLSRKGSKTASSSSVSIPRISSLRHQKEAASSP), and 535-556 (SQNFAPLSSSSPMSVSEKPSVV). Low complexity-rich tracts occupy residues 498-511 (KTASSSSVSIPRIS) and 540-555 (PLSSSSPMSVSEKPSV). A nucleoside 3',5'-cyclic phosphate-binding positions include 661-782 (PINV…LTKL) and 778-918 (TLTK…VAHK). 2 disordered regions span residues 828 to 852 (QKSKNEERLSRPTTQRKKRKDDNQP) and 1125 to 1145 (SSQNPSERVDSKAPPIPGAPP). One can recognise a PNPLA domain in the interval 1219-1383 (LVLGGGGARG…LDNLPVLEMK (165 aa)). Positions 1223–1228 (GGGARG) match the GXGXXG motif. The short motif at 1250–1254 (GTSIG) is the GXSXG element. Ser-1252 (nucleophile) is an active-site residue. The active-site Proton acceptor is Asp-1370. Residues 1370–1372 (DGG) carry the DGA/G motif.

This sequence belongs to the NTE family.

The protein localises to the endoplasmic reticulum membrane. It catalyses the reaction a 1-acyl-sn-glycero-3-phosphocholine + H2O = sn-glycerol 3-phosphocholine + a fatty acid + H(+). With respect to regulation, inhibited by organophosphorus esters. Its function is as follows. Intracellular phospholipase B that catalyzes the double deacylation of phosphatidylcholine (PC) to glycerophosphocholine (GroPCho). Plays an important role in membrane lipid homeostasis. Responsible for the rapid PC turnover in response to inositol, elevated temperatures, or when choline is present in the growth medium. This Eremothecium gossypii (strain ATCC 10895 / CBS 109.51 / FGSC 9923 / NRRL Y-1056) (Yeast) protein is Lysophospholipase NTE1 (NTE1).